A 273-amino-acid chain; its full sequence is Large ribosomal subunit protein uL2 (273 aa).

2 disordered regions span residues 35–54 (DKKD…TRHI) and 222–273 (GMAM…RRNK). A compositionally biased stretch (basic and acidic residues) spans 229-239 (DHPHGGGEGRN). A compositionally biased stretch (basic residues) spans 253-273 (KGFKTRKNKRTDKYIVRRRNK).

Belongs to the universal ribosomal protein uL2 family. As to quaternary structure, part of the 50S ribosomal subunit. Forms a bridge to the 30S subunit in the 70S ribosome.

One of the primary rRNA binding proteins. Required for association of the 30S and 50S subunits to form the 70S ribosome, for tRNA binding and peptide bond formation. It has been suggested to have peptidyltransferase activity; this is somewhat controversial. Makes several contacts with the 16S rRNA in the 70S ribosome. This Aeromonas hydrophila subsp. hydrophila (strain ATCC 7966 / DSM 30187 / BCRC 13018 / CCUG 14551 / JCM 1027 / KCTC 2358 / NCIMB 9240 / NCTC 8049) protein is Large ribosomal subunit protein uL2.